The sequence spans 283 residues: Nopaline-binding periplasmic protein (283 aa).

Positions 1-25 (MKFFNLNALAAVVTGVLLAAGPTQA) are cleaved as a signal peptide. C63 and C70 are joined by a disulfide.

It belongs to the bacterial solute-binding protein 3 family.

The protein resides in the periplasm. Component of the nopaline active transport system probably consisting of four subunits: Q, M, P and T. This system is also capable of transporting octopine provided that catabolic functions are induced with nopaline. This is Nopaline-binding periplasmic protein (nocT) from Agrobacterium fabrum (strain C58 / ATCC 33970) (Agrobacterium tumefaciens (strain C58)).